Consider the following 93-residue polypeptide: UPF0728 protein C10orf53 homolog (93 aa).

Belongs to the UPF0728 family.

The protein is UPF0728 protein C10orf53 homolog of Bos taurus (Bovine).